Consider the following 146-residue polypeptide: Hemoglobin subunit beta (146 aa).

Positions 2 to 146 (HWSAEEKQLI…VAHALARKYH (145 aa)) constitute a Globin domain. Heme b contacts are provided by His-63 and His-92.

Belongs to the globin family. As to quaternary structure, heterotetramer of two alpha chains and two beta chains. As to expression, red blood cells.

In terms of biological role, involved in oxygen transport from the lung to the various peripheral tissues. The chain is Hemoglobin subunit beta (HBB) from Anser anser anser (Western greylag goose).